The primary structure comprises 355 residues: Peptide chain release factor 1 (355 aa).

Q231 is modified (N5-methylglutamine). Over residues 280 to 293 the composition is skewed to basic and acidic residues; sequence KERKAKEQSERKDQ. A disordered region spans residues 280 to 307; the sequence is KERKAKEQSERKDQVGTGDRSGRIRTYN.

The protein belongs to the prokaryotic/mitochondrial release factor family. Post-translationally, methylated by PrmC. Methylation increases the termination efficiency of RF1.

It localises to the cytoplasm. Functionally, peptide chain release factor 1 directs the termination of translation in response to the peptide chain termination codons UAG and UAA. This Campylobacter hominis (strain ATCC BAA-381 / DSM 21671 / CCUG 45161 / LMG 19568 / NCTC 13146 / CH001A) protein is Peptide chain release factor 1.